The chain runs to 284 residues: Syntaxin-like protein psy1 (284 aa).

Residues 23-57 (EEIDHIRDAIRQIEDNVGRIEMLHQQSLQEIDEAN) adopt a coiled-coil conformation. In terms of domain architecture, t-SNARE coiled-coil homology spans 181–243 (LREVQERHAD…GEGTQHMDRA (63 aa)). Residues 260–280 (ICVVIICVIVAVLCGVLIPVL) traverse the membrane as a helical; Anchor for type IV membrane protein segment.

This sequence belongs to the syntaxin family.

It localises to the cell membrane. The protein resides in the prospore membrane. This Schizosaccharomyces pombe (strain 972 / ATCC 24843) (Fission yeast) protein is Syntaxin-like protein psy1 (psy1).